The following is a 363-amino-acid chain: 3-dehydroquinate synthase (363 aa).

Residues D75–K80, G109–D113, T133–S134, K146, K155, and T173–T176 contribute to the NAD(+) site. Zn(2+) contacts are provided by E188, H251, and H267.

The protein belongs to the sugar phosphate cyclases superfamily. Dehydroquinate synthase family. Requires Co(2+) as cofactor. It depends on Zn(2+) as a cofactor. NAD(+) serves as cofactor.

The protein resides in the cytoplasm. The enzyme catalyses 7-phospho-2-dehydro-3-deoxy-D-arabino-heptonate = 3-dehydroquinate + phosphate. Its pathway is metabolic intermediate biosynthesis; chorismate biosynthesis; chorismate from D-erythrose 4-phosphate and phosphoenolpyruvate: step 2/7. Its function is as follows. Catalyzes the conversion of 3-deoxy-D-arabino-heptulosonate 7-phosphate (DAHP) to dehydroquinate (DHQ). The polypeptide is 3-dehydroquinate synthase (Pseudarthrobacter chlorophenolicus (strain ATCC 700700 / DSM 12829 / CIP 107037 / JCM 12360 / KCTC 9906 / NCIMB 13794 / A6) (Arthrobacter chlorophenolicus)).